A 414-amino-acid polypeptide reads, in one-letter code: Schlafen-like protein 1 (414 aa).

The disordered stretch occupies residues 141 to 203 (LHHREQDDSG…ISQNRPSGVR (63 aa)). Positions 154-185 (SHSPGPSPGPSPGPSPGFRRPPLPQLADPPPN) are enriched in pro residues. 268–275 (GVEDSGLV) serves as a coordination point for ATP. The stretch at 373–407 (RQKWTAELSKLEEKVDVLTLEKEQLQEQLRQRQTL) forms a coiled coil.

The protein belongs to the Schlafen family. Subgroup I subfamily.

In Rattus norvegicus (Rat), this protein is Schlafen-like protein 1 (Slfnl1).